The primary structure comprises 2293 residues: MKGHQFKSWIFELREIVREIKNSHYFLDSWTQFNSVGSFIHIFFHQERFRKLLDPRIFSILLLRNSQGSTSNRYFTIKGVGLFVVAALLYRINNRNMVESKNLYLKGLLPIPMNSIGPRNDTSEESFGSSNINRLIVSLLYLTKGKKISESCFRDPKESTWVLPITQKCIMPESNWSSRWWRNWIGKKRDFCCKISNETVAGIDISFKDKEKDIKYLEFLFVYYMDDPIRKGHDWELFDRLSPSKRRNIINLNSGQLFEILVKDWICYLMFAFREKIPIEVEGFFKQQGAGSTIQSNDIEHVSHLFSRNKWAISLQNCAQFHMWQFHQDLFVSWGKNPHESDFLRKISRENWIWLDNVWLVNKDRFFSKVRNVSSNIQYDSTRSSFVQVTDSSQLNGSSDQFIDPFDSISNEDSEYHYHTLFNQREIQQLKERSILLDPSFIQTEGREIESDRFPKYLSGYSSMPRLFTEREKRMNNHLLPEESEEFLGNPTRAIRSFFSDRWSELHLGSNPTERSTRDQKLLKKEQDVSFVPSRRSENKEIVNIFKIITYLQNTVSIHPISSDLGCDMVPQDELDMDSSNKISFLNKNPFFDLFHLFHERKRGGYELRHESEERFQEMADLFTLSITEPDLVYHKGFAFSIDSYGLDQRQFLKEVFNSRDESKKKSLLVLPPIFYEENESFYRRIRKNWVRISCGNYLEDPKRVVFASNNIMEAVNQYRLIRNLIQIQFQYSPYGYIRNVLNRFFLMKRPDRNFEYGIQRDLIGNDTLNHSTIMKDTINQHLSNLKKSQKKWFDPLIFLSQTERSINRDPNAYRYKWSNGSKNFQEHLEHFVSERKSRFQVVFDQLCINQYSIDWSEVIDKKDLSKSLRFFLSKLLRFFLSKLLLFLSKLLLFLSNSLPFFFVSFENIPIHRSEIHIYELKGPNDQLCNQLLESIGLQIVHLKKLKPFLLDDHNTSQKSKFLINGGTISPFLFNKIPKWMIDSFHTRKNRRKSFDNTDSYFSIVSHDQDNWLNPVKPFQRSSLISSFSKANRLRFLNNPHHFCFYCNKRFPFYVEKTRLKNSDFTYGQFLTILFIHNKIFSSCGGKKKHAFLERDTISPSSIESQVSNIFISNDFPQSGDERYNLYKSFHFPIRSDPLVRRAIYSIADISGTPLIEGQRVNFERTYCQTLSDMNLSDSEEKSLHQYLNFNSNMGLIHTPCSEKYLQRKKRSLCLKKCVDKGQMDRTFQRDSAFSTLSKWNLFQTYMPWFFTSTGYKYLNLIFLDTFSDLLRILSSSQKFVSIFHDIMHGLDISWRILQKKLCLPQRNLISEISSKSLHNLLLSEEMIHRNNESSLISTHLRSPNVREVLYSILFLLLVAGYIVRTHLLFVSRAYSELQTEFEKIKSLMIPSYMIELRKLLDRYPTSELNSFWLKNLFLVALEQLGDCLEEIRGSGGNMLWGGDPAYGVKSIRSKKKDLKINFIDIIDLISIIPNPINRITFSRNTRHLSHTSKKIYSVIRKRKNVSGDWIDDKIESWVANSDSIDDKEREFLVQFSTLRAEKRIDQILLSLTHSDHLSKNDSGYQMIEQPGTIYLRYLVDIHKKYLMNYEFNTSCLAERRIFLAHYQTITYSQTSCGANSFHFPSHGKPFSLRLALSPSRSILVIGSIGTGRSYLVKYLATNSYVPFITVFLNKFLDNKPKGFFIDDIDIDDSDDIDASNDIHRELDTELELLTMMNALTMDMMSEIDRFYITLQFELAKAMSPCIIWIPNIHDLDVNESSYLALGLLVNSLSRDCERCSTRNILVIASTHIPQKVDPALIAPNKLNTCIKIRRLLIPQQRKHFFTLSYTRGFHLEKKMFHTNGFESITMGSSARDLVALTNEALSISITQKKSIIDTNTIRSALHRQTWDLRSQVRSVQDHGILFYQIGRAVAQNVLISNCPIDPISIYMKKKSCNEGDSYLYKWYFELGTSMKKFTILLYLLSCSAGSVAQDLWSLPGPDEKNRITSYGFIENDSDLVHGLLEVQGALVGSSRTEKDCSQFDNDRVTLLFRSEPRDPLYMMQDGSCSIVDQRFLYEKYESGFEEGEGEGVLDPQQIEEDLFNHIVWAPRIWRPRGFLFDCIERPNELGFPYLAGSFRGKRIIYDEKYELQENDSEFLQSGTMQYQRRDRSSKEQGFFRISQFIWDPADPLFLLFKDQPFVSVFSHREFFADEEMSKGLLTSQTDPPTSIYKRWFIKNTQEKHFELLIQRQRWLRTNSSLSNGFFRSNTRSESYQYLSNLFLSNGTLLDRMTKTLLKKRWLFSDEMKIGFM.

G1647–S1654 is a binding site for ATP.

The protein belongs to the Ycf2 family.

Its subcellular location is the plastid. It localises to the chloroplast stroma. In terms of biological role, probable ATPase of unknown function. Its presence in a non-photosynthetic plant (Epifagus virginiana) and experiments in tobacco indicate that it has an essential function which is probably not related to photosynthesis. The polypeptide is Protein Ycf2 B (Crucihimalaya wallichii (Rock-cress)).